Here is a 129-residue protein sequence, read N- to C-terminus: Large ribosomal subunit protein eL32 (129 aa).

This sequence belongs to the eukaryotic ribosomal protein eL32 family.

This chain is Large ribosomal subunit protein eL32 (rpl32e), found in Methanosarcina mazei (strain ATCC BAA-159 / DSM 3647 / Goe1 / Go1 / JCM 11833 / OCM 88) (Methanosarcina frisia).